A 238-amino-acid polypeptide reads, in one-letter code: Putative type I specificity subunit S.MpnORF201P (238 aa).

It belongs to the type-I restriction system S methylase family. The methyltransferase is composed of M and S polypeptides.

The specificity (S) subunit of a type I methyltransferase (MTase); this subunit dictates DNA sequence specificity. The single R subunit has multiple frameshifts and is probably not expressed. The polypeptide is Putative type I specificity subunit S.MpnORF201P (Mycoplasma pneumoniae (strain ATCC 29342 / M129 / Subtype 1) (Mycoplasmoides pneumoniae)).